Consider the following 324-residue polypeptide: tRNA U34 carboxymethyltransferase (324 aa).

Residues Lys-91, Trp-105, Lys-110, Gly-130, 152-154, 181-182, Met-196, Tyr-200, and Arg-315 contribute to the carboxy-S-adenosyl-L-methionine site; these read DPS and IE.

Belongs to the class I-like SAM-binding methyltransferase superfamily. CmoB family. Homotetramer.

It carries out the reaction carboxy-S-adenosyl-L-methionine + 5-hydroxyuridine(34) in tRNA = 5-carboxymethoxyuridine(34) in tRNA + S-adenosyl-L-homocysteine + H(+). Functionally, catalyzes carboxymethyl transfer from carboxy-S-adenosyl-L-methionine (Cx-SAM) to 5-hydroxyuridine (ho5U) to form 5-carboxymethoxyuridine (cmo5U) at position 34 in tRNAs. The chain is tRNA U34 carboxymethyltransferase from Aliivibrio fischeri (strain ATCC 700601 / ES114) (Vibrio fischeri).